A 250-amino-acid polypeptide reads, in one-letter code: Small ribosomal subunit protein uS3z (250 aa).

Positions Leu21–Asn92 constitute a KH type-2 domain.

The protein belongs to the universal ribosomal protein uS3 family. In terms of assembly, interacts with SNRNP35.

The chain is Small ribosomal subunit protein uS3z (RPS3A) from Arabidopsis thaliana (Mouse-ear cress).